Consider the following 93-residue polypeptide: Cell division topological specificity factor (93 aa).

Belongs to the MinE family.

In terms of biological role, prevents the cell division inhibition by proteins MinC and MinD at internal division sites while permitting inhibition at polar sites. This ensures cell division at the proper site by restricting the formation of a division septum at the midpoint of the long axis of the cell. The protein is Cell division topological specificity factor of Methylococcus capsulatus (strain ATCC 33009 / NCIMB 11132 / Bath).